Here is a 236-residue protein sequence, read N- to C-terminus: NADH-quinone oxidoreductase subunit C (236 aa).

Residues 1–20 (MSPPNQDAQEGRPDSPTAEV) are disordered.

Belongs to the complex I 30 kDa subunit family. In terms of assembly, NDH-1 is composed of 14 different subunits. Subunits NuoB, C, D, E, F, and G constitute the peripheral sector of the complex.

The protein localises to the cell membrane. The enzyme catalyses a quinone + NADH + 5 H(+)(in) = a quinol + NAD(+) + 4 H(+)(out). NDH-1 shuttles electrons from NADH, via FMN and iron-sulfur (Fe-S) centers, to quinones in the respiratory chain. The immediate electron acceptor for the enzyme in this species is believed to be a menaquinone. Couples the redox reaction to proton translocation (for every two electrons transferred, four hydrogen ions are translocated across the cytoplasmic membrane), and thus conserves the redox energy in a proton gradient. The chain is NADH-quinone oxidoreductase subunit C from Mycobacterium tuberculosis (strain ATCC 25177 / H37Ra).